A 180-amino-acid chain; its full sequence is Inner membrane-spanning protein YciB (180 aa).

The next 5 membrane-spanning stretches (helical) occupy residues 11–31 (ILFF…ALII), 52–72 (IIMG…NKVE), 76–96 (WKVT…QYGF), 121–141 (LAWA…SQYC), and 149–169 (FKSF…GIYV).

It belongs to the YciB family.

It localises to the cell inner membrane. Plays a role in cell envelope biogenesis, maintenance of cell envelope integrity and membrane homeostasis. This chain is Inner membrane-spanning protein YciB, found in Mannheimia succiniciproducens (strain KCTC 0769BP / MBEL55E).